Reading from the N-terminus, the 234-residue chain is Peptidyl-prolyl cis-trans isomerase FKBP17-3, chloroplastic (234 aa).

Residues 1-28 (MATLFTATVPSHHRFVSPSQHPKQSLLS) constitute a chloroplast transit peptide. Residues 130–228 (GYLVVFDVKG…DYIIEVDTVY (99 aa)) enclose the PPIase FKBP-type domain.

The protein belongs to the FKBP-type PPIase family.

The protein resides in the plastid. It is found in the chloroplast thylakoid lumen. The catalysed reaction is [protein]-peptidylproline (omega=180) = [protein]-peptidylproline (omega=0). Functionally, PPIases accelerate the folding of proteins. It catalyzes the cis-trans isomerization of proline imidic peptide bonds in oligopeptides. The polypeptide is Peptidyl-prolyl cis-trans isomerase FKBP17-3, chloroplastic (FKBP17-3) (Arabidopsis thaliana (Mouse-ear cress)).